A 259-amino-acid chain; its full sequence is Phosphate import ATP-binding protein PstB (259 aa).

The ABC transporter domain occupies 2 to 248; sequence GQRIDVNHEN…ITMFNNPQNE (247 aa). ATP is bound at residue 37-44; that stretch reads GPSGCGKS.

It belongs to the ABC transporter superfamily. Phosphate importer (TC 3.A.1.7) family. As to quaternary structure, the complex is composed of two ATP-binding proteins (PstB), two transmembrane proteins (PstC and PstA) and a solute-binding protein (PstS).

The protein resides in the cell membrane. The catalysed reaction is phosphate(out) + ATP + H2O = ADP + 2 phosphate(in) + H(+). Part of the ABC transporter complex PstSACB involved in phosphate import. Responsible for energy coupling to the transport system. In Bifidobacterium longum (strain NCC 2705), this protein is Phosphate import ATP-binding protein PstB.